Consider the following 485-residue polypeptide: Glutamyl-tRNA(Gln) amidotransferase subunit A (485 aa).

Catalysis depends on charge relay system residues Lys-76 and Ser-152. Ser-176 serves as the catalytic Acyl-ester intermediate.

The protein belongs to the amidase family. GatA subfamily. As to quaternary structure, heterotrimer of A, B and C subunits.

It carries out the reaction L-glutamyl-tRNA(Gln) + L-glutamine + ATP + H2O = L-glutaminyl-tRNA(Gln) + L-glutamate + ADP + phosphate + H(+). In terms of biological role, allows the formation of correctly charged Gln-tRNA(Gln) through the transamidation of misacylated Glu-tRNA(Gln) in organisms which lack glutaminyl-tRNA synthetase. The reaction takes place in the presence of glutamine and ATP through an activated gamma-phospho-Glu-tRNA(Gln). This is Glutamyl-tRNA(Gln) amidotransferase subunit A from Dechloromonas aromatica (strain RCB).